We begin with the raw amino-acid sequence, 426 residues long: Serine--tRNA ligase (426 aa).

Positions 1 to 15 (MIDVKDLSENPDKFR) are enriched in basic and acidic residues. Residues 1-22 (MIDVKDLSENPDKFRASQRARG) form a disordered region. 228–230 (TSE) is an L-serine binding site. ATP is bound by residues 259–261 (RRE) and Val-275. An L-serine-binding site is contributed by Glu-282. 346–349 (ELTS) is an ATP binding site. L-serine is bound at residue Thr-386.

It belongs to the class-II aminoacyl-tRNA synthetase family. Type-1 seryl-tRNA synthetase subfamily. Homodimer. The tRNA molecule binds across the dimer.

Its subcellular location is the cytoplasm. It catalyses the reaction tRNA(Ser) + L-serine + ATP = L-seryl-tRNA(Ser) + AMP + diphosphate + H(+). The catalysed reaction is tRNA(Sec) + L-serine + ATP = L-seryl-tRNA(Sec) + AMP + diphosphate + H(+). It functions in the pathway aminoacyl-tRNA biosynthesis; selenocysteinyl-tRNA(Sec) biosynthesis; L-seryl-tRNA(Sec) from L-serine and tRNA(Sec): step 1/1. Functionally, catalyzes the attachment of serine to tRNA(Ser). Is also able to aminoacylate tRNA(Sec) with serine, to form the misacylated tRNA L-seryl-tRNA(Sec), which will be further converted into selenocysteinyl-tRNA(Sec). The sequence is that of Serine--tRNA ligase from Pseudarthrobacter chlorophenolicus (strain ATCC 700700 / DSM 12829 / CIP 107037 / JCM 12360 / KCTC 9906 / NCIMB 13794 / A6) (Arthrobacter chlorophenolicus).